We begin with the raw amino-acid sequence, 320 residues long: Transaldolase (320 aa).

Catalysis depends on Lys-135, which acts as the Schiff-base intermediate with substrate.

It belongs to the transaldolase family. Type 1 subfamily. Homodimer.

Its subcellular location is the cytoplasm. The enzyme catalyses D-sedoheptulose 7-phosphate + D-glyceraldehyde 3-phosphate = D-erythrose 4-phosphate + beta-D-fructose 6-phosphate. The protein operates within carbohydrate degradation; pentose phosphate pathway; D-glyceraldehyde 3-phosphate and beta-D-fructose 6-phosphate from D-ribose 5-phosphate and D-xylulose 5-phosphate (non-oxidative stage): step 2/3. Transaldolase is important for the balance of metabolites in the pentose-phosphate pathway. In Colwellia psychrerythraea (strain 34H / ATCC BAA-681) (Vibrio psychroerythus), this protein is Transaldolase.